We begin with the raw amino-acid sequence, 337 residues long: Tetraacyldisaccharide 4'-kinase (337 aa).

56–63 (VAGGAGKT) lines the ATP pocket.

It belongs to the LpxK family.

The catalysed reaction is a lipid A disaccharide + ATP = a lipid IVA + ADP + H(+). It participates in glycolipid biosynthesis; lipid IV(A) biosynthesis; lipid IV(A) from (3R)-3-hydroxytetradecanoyl-[acyl-carrier-protein] and UDP-N-acetyl-alpha-D-glucosamine: step 6/6. In terms of biological role, transfers the gamma-phosphate of ATP to the 4'-position of a tetraacyldisaccharide 1-phosphate intermediate (termed DS-1-P) to form tetraacyldisaccharide 1,4'-bis-phosphate (lipid IVA). The sequence is that of Tetraacyldisaccharide 4'-kinase from Rhodospirillum centenum (strain ATCC 51521 / SW).